We begin with the raw amino-acid sequence, 71 residues long: MVLKMEIKWYVKRGFEDNLIDALNTYGSACVLGLAGMGKTTIARYIYTKLRREGVKVVYLTSDEESKTIKF.

This is an uncharacterized protein from Methanocaldococcus jannaschii (strain ATCC 43067 / DSM 2661 / JAL-1 / JCM 10045 / NBRC 100440) (Methanococcus jannaschii).